The sequence spans 327 residues: uncharacterized protein (327 aa).

Residues 12-31 (PLGTTKSYHMNTSTVSPPSP) form a disordered region. Helical transmembrane passes span 183–203 (VSSPSVEVYIAGCCGGVPVIL) and 292–312 (VGVGIGLGMCLGVGIGVGLLM).

It localises to the membrane. This is an uncharacterized protein from Arabidopsis thaliana (Mouse-ear cress).